Reading from the N-terminus, the 106-residue chain is MKSFFVVALLVAAAAAAPANPDADAVIVRYDADQGDPQHYSYSVETSNGIAFSEEGALKNVGSENEANSVRGSYAYVGPDGVTYSVVYIADENGFQPQGAHLPVAA.

An N-terminal signal peptide occupies residues 1-16; the sequence is MKSFFVVALLVAAAAA. The region spanning 37 to 106 is the Chitin-binding type R&amp;R domain; that stretch reads PQHYSYSVET…PQGAHLPVAA (70 aa).

In terms of biological role, component of the cuticle of tobacco hornworm. The chain is Cuticle protein CP14.6 (CP14.6) from Manduca sexta (Tobacco hawkmoth).